Consider the following 564-residue polypeptide: Cytochrome c oxidase subunit 1 (564 aa).

Residues 1-23 (MTAVAPRLENYAEPTRPAPTGGA) are disordered. 7 helical membrane-spanning segments follow: residues 43 to 63 (MMYIVMSFVWFFVGGLMALLI), 83 to 103 (LFTLHGTIMLLAFGTPVVWGF), 122 to 142 (LNAFGFWITQIGVVAMLAGFL), 171 to 191 (FWIIGVGATGVGTIASAVNMI), 214 to 234 (IFVASVIVLLIFPLLTAAALG), 259 to 279 (LFWFFGHPEVYVLALPFFGIV), and 292 to 312 (FGYIGLVFATLSIGMLSMAVW). H87 is a Fe(II)-heme a binding site. Positions 265 and 269 each coordinate Cu cation. The segment at residues 265 to 269 (HPEVY) is a cross-link (1'-histidyl-3'-tyrosine (His-Tyr)). 2 residues coordinate Cu cation: H314 and H315. 2 helical membrane passes run 316–336 (MFVTGAILLPFFSFMTFLISV) and 360–380 (MTWTMGFLVTFLFGGLTGIML). Heme a3 is bound at residue H398. Transmembrane regions (helical) follow at residues 399 to 419 (FHYTLFGTVVFASYAGVYFWF), 434 to 454 (IHFWITFVGFHGTFLVQHWVG), and 477 to 497 (ISTVFSFLLGVSVIPFIWNVF). Position 400 (H400) interacts with Fe(II)-heme a.

It belongs to the heme-copper respiratory oxidase family. In terms of assembly, associates with subunits II, III and IV to form cytochrome c oxidase. Cu(2+) serves as cofactor. Heme is required as a cofactor.

The protein localises to the cell membrane. It catalyses the reaction 4 Fe(II)-[cytochrome c] + O2 + 8 H(+)(in) = 4 Fe(III)-[cytochrome c] + 2 H2O + 4 H(+)(out). The protein operates within energy metabolism; oxidative phosphorylation. Functionally, cytochrome c oxidase is the component of the respiratory chain that catalyzes the reduction of oxygen to water. Subunits 1-3 form the functional core of the enzyme complex. CO I is the catalytic subunit of the enzyme. Electrons originating in cytochrome c are transferred via the copper A center of subunit 2 and heme A of subunit 1 to the bimetallic center formed by heme A3 and copper B. The protein is Cytochrome c oxidase subunit 1 (ctaD) of Corynebacterium diphtheriae (strain ATCC 700971 / NCTC 13129 / Biotype gravis).